Here is a 535-residue protein sequence, read N- to C-terminus: CTP synthase (535 aa).

Positions 1–266 are amidoligase domain; that stretch reads MKFVVITGGV…GDYICERLGL (266 aa). Ser12 lines the CTP pocket. Ser12 provides a ligand contact to UTP. ATP is bound by residues 13–18 and Asp70; that span reads GIGKGI. 2 residues coordinate Mg(2+): Asp70 and Glu140. CTP contacts are provided by residues 147–149, 187–192, and Lys223; these read DIE and KTKPTQ. Residues 187–192 and Lys223 each bind UTP; that span reads KTKPTQ. Residues 291-535 form the Glutamine amidotransferase type-1 domain; that stretch reads RIAVVGKYVD…IKAAAGQGPD (245 aa). Position 355 (Gly355) interacts with L-glutamine. Cys382 acts as the Nucleophile; for glutamine hydrolysis in catalysis. L-glutamine-binding positions include 383-386, Glu406, and Arg464; that span reads LGFQ. Residues His508 and Glu510 contribute to the active site.

It belongs to the CTP synthase family. As to quaternary structure, homotetramer.

It carries out the reaction UTP + L-glutamine + ATP + H2O = CTP + L-glutamate + ADP + phosphate + 2 H(+). The catalysed reaction is L-glutamine + H2O = L-glutamate + NH4(+). The enzyme catalyses UTP + NH4(+) + ATP = CTP + ADP + phosphate + 2 H(+). The protein operates within pyrimidine metabolism; CTP biosynthesis via de novo pathway; CTP from UDP: step 2/2. Allosterically activated by GTP, when glutamine is the substrate; GTP has no effect on the reaction when ammonia is the substrate. The allosteric effector GTP functions by stabilizing the protein conformation that binds the tetrahedral intermediate(s) formed during glutamine hydrolysis. Inhibited by the product CTP, via allosteric rather than competitive inhibition. Its function is as follows. Catalyzes the ATP-dependent amination of UTP to CTP with either L-glutamine or ammonia as the source of nitrogen. Regulates intracellular CTP levels through interactions with the four ribonucleotide triphosphates. The polypeptide is CTP synthase (Methanopyrus kandleri (strain AV19 / DSM 6324 / JCM 9639 / NBRC 100938)).